Reading from the N-terminus, the 324-residue chain is GDP-mannose transporter (324 aa).

The Cytoplasmic portion of the chain corresponds to 1–13 (MSELKSRIGNSGS). A helical transmembrane segment spans residues 14-34 (IANSGPVSILCYCASSILMTV). The Lumenal segment spans residues 35–44 (TNKFVVNTDG). The helical transmembrane segment at 45–65 (FNMFFVMLFAQSLVCTMCLMV) threads the bilayer. Over 66-76 (LKMFGYAKYRP) the chain is Cytoplasmic. The chain crosses the membrane as a helical span at residues 77–97 (LNLIDVKNWLPISFLLVFMIF). Residues 98–116 (TSAKALKYMPVPIYTIFKN) are Lumenal-facing. A glycan (N-linked (GlcNAc...) asparagine) is linked at Asn-116. A helical transmembrane segment spans residues 117–137 (LTIILIAYGEVLFFGGSVTPM). Glu-138 is a topological domain (cytoplasmic). Residues 139–159 (LSSFILMVLSSVVASLGDQQA) traverse the membrane as a helical segment. The Lumenal segment spans residues 160–170 (AKIAQPLANNS). N-linked (GlcNAc...) asparagine glycosylation is present at Asn-168. The chain crosses the membrane as a helical span at residues 171–191 (ILSPEYYWMFLNCICSASFVL). Over 192–204 (IMRKRIKLTNFKD) the chain is Cytoplasmic. The chain crosses the membrane as a helical span at residues 205-225 (YDTMFYNNALALPILLGFSFL). Residues 226-243 (SEDWSSENLAQNFSGESL) are Lumenal-facing. A glycan (N-linked (GlcNAc...) asparagine) is linked at Asn-237. The helical transmembrane segment at 244–264 (SAMIISGMTSVGISYCSGWCV) threads the bilayer. The Cytoplasmic portion of the chain corresponds to 265–270 (RATSST). A helical membrane pass occupies residues 271-291 (TYSMVGALNKLPIALAGLIFF). Residues 292–295 (DAPR) lie on the Lumenal side of the membrane. A helical membrane pass occupies residues 296–316 (NFLSIMSIFIGFASGLSYAVA). At 317–324 (KQKKVQKN) the chain is on the cytoplasmic side.

This sequence belongs to the TPT transporter family. SLC35D subfamily. In terms of assembly, homooligomer.

The protein resides in the golgi apparatus membrane. It is found in the cytoplasmic vesicle membrane. It localises to the endoplasmic reticulum membrane. Its function is as follows. Involved in the import of GDP-mannose from the cytoplasm into the Golgi lumen. The polypeptide is GDP-mannose transporter (VRG4) (Candida glabrata (strain ATCC 2001 / BCRC 20586 / JCM 3761 / NBRC 0622 / NRRL Y-65 / CBS 138) (Yeast)).